We begin with the raw amino-acid sequence, 410 residues long: Cytochrome P450 (410 aa).

Cysteine 359 lines the heme pocket.

The protein belongs to the cytochrome P450 family. Heme serves as cofactor.

In Bacillus subtilis (strain 168), this protein is Cytochrome P450 (cypA).